The primary structure comprises 474 residues: Transcription factor SOX-4 (474 aa).

Residues 1-10 (MVQQTNNAEN) are compositionally biased toward polar residues. Positions 1–58 (MVQQTNNAENTEALLAGESSDSGAGLELGIASSPTPGSTASTGGKADDPSWCKTPSGH) are disordered. Over residues 31 to 44 (ASSPTPGSTASTGG) the composition is skewed to low complexity. The segment at residues 59–127 (IKRPMNAFMV…KHMADYPDYK (69 aa)) is a DNA-binding region (HMG box). Lys-95 carries the N6-acetyllysine modification. Disordered stretches follow at residues 128–228 (YRPR…GGGK), 262–286 (ARTP…APGK), and 302–416 (LGTS…NFES). Positions 138–149 (NANSSSSAAASS) are enriched in low complexity. Positions 158 to 189 (VGGSGGGGHGGGGGGGSSNAGGGGGGASGGGA) are enriched in gly residues. 4 stretches are compositionally biased toward low complexity: residues 266–283 (SASA…ALAA), 304–320 (TSSS…DPSD), 336–354 (APSL…AGRS), and 366–396 (AASP…GSSS). A compositionally biased stretch (acidic residues) spans 397–406 (SDDEFEDDLL). The segment covering 407–416 (DLNPSSNFES) has biased composition (low complexity). The 9aaTAD motif lies at 426 to 434 (SALDRDLDF).

In terms of assembly, interacts with UBE2I. Interacts with HDAC1; interaction inhibits the transcriptional activator activity. In terms of processing, acetylation at Lys-95 by KAT5 promotes the transcription activator activity and is required during myoblast differentiation. Acetylation by KAT5 abolishes the interaction between SOX4 and HDAC1 and switches SOX4 into a transcriptional activator. As to expression, testis, brain, and heart.

The protein localises to the nucleus. Functionally, transcriptional activator that binds with high affinity to the T-cell enhancer motif 5'-AACAAAG-3' motif. Required for IL17A-producing Vgamma2-positive gamma-delta T-cell maturation and development, via binding to regulator loci of RORC to modulate expression. Involved in skeletal myoblast differentiation by promoting gene expression of CALD1. This Homo sapiens (Human) protein is Transcription factor SOX-4.